Consider the following 247-residue polypeptide: TLC domain-containing protein 1 (247 aa).

The first 27 residues, 1–27 (MPLLLHPAWPLLLGATLTFRALRRVLC), serve as a signal peptide directing secretion. The Extracellular segment spans residues 28 to 46 (RLPLPAHVQTDPLRTWRWH). Residues 40-234 (LRTWRWHNLL…LLRSDFCPER (195 aa)) enclose the TLC domain. A helical transmembrane segment spans residues 47–67 (NLLVSFTHSIVSGIWALLCIW). Over 68-83 (QTPEMLVEIETAWSVC) the chain is Cytoplasmic. A helical transmembrane segment spans residues 84 to 104 (GYLLVCFSAGYFIHDTVDIVV). The Extracellular portion of the chain corresponds to 105 to 123 (SRQTRASWEYLVHHVMAMG). The segment at residues 124–144 (AFFSGIFWKRFVGGGVLTLLV) is an intramembrane region (helical). Over 145-173 (EVSNIFLTLRMMMKINNAQDILLYKVNKY) the chain is Extracellular. Residues 174-194 (VNLVMYFLFRLAPQAYLTKFF) traverse the membrane as a helical segment. The Cytoplasmic portion of the chain corresponds to 195–201 (LQYAGQR). Residues 202 to 222 (TLGTFLLSILLMLDVMILIYF) form a helical membrane-spanning segment. Over 223–247 (SRLLRSDFCPERAPSRQQKDKFLTE) the chain is Extracellular.

The protein localises to the cell membrane. Its function is as follows. Regulates the composition and fluidity of the plasma membrane. Inhibits the incorporation of membrane-fluidizing phospholipids containing omega-3 long-chain polyunsaturated fatty acids (LCPUFA) and thereby promotes membrane rigidity. Does not appear to have any effect on LCPUFA synthesis. This is TLC domain-containing protein 1 (Tlcd1) from Rattus norvegicus (Rat).